A 420-amino-acid chain; its full sequence is Gamma-glutamyl phosphate reductase (420 aa).

Belongs to the gamma-glutamyl phosphate reductase family.

It is found in the cytoplasm. The catalysed reaction is L-glutamate 5-semialdehyde + phosphate + NADP(+) = L-glutamyl 5-phosphate + NADPH + H(+). It functions in the pathway amino-acid biosynthesis; L-proline biosynthesis; L-glutamate 5-semialdehyde from L-glutamate: step 2/2. Catalyzes the NADPH-dependent reduction of L-glutamate 5-phosphate into L-glutamate 5-semialdehyde and phosphate. The product spontaneously undergoes cyclization to form 1-pyrroline-5-carboxylate. The protein is Gamma-glutamyl phosphate reductase of Cereibacter sphaeroides (strain KD131 / KCTC 12085) (Rhodobacter sphaeroides).